A 138-amino-acid chain; its full sequence is Acidic phospholipase A2 CH-E6' (138 aa).

A signal peptide spans 1-16 (MRTLWIVAVLLLGVEG). Cystine bridges form between C42-C131, C44-C60, C59-C111, C65-C138, C66-C104, C73-C97, and C91-C102. Residues Y43, G45, and G47 each contribute to the Ca(2+) site. Residue H63 is part of the active site. Residue D64 participates in Ca(2+) binding. Residue D105 is part of the active site.

This sequence belongs to the phospholipase A2 family. Group II subfamily. D49 sub-subfamily. The cofactor is Ca(2+). As to expression, expressed by the venom gland.

Its subcellular location is the secreted. The catalysed reaction is a 1,2-diacyl-sn-glycero-3-phosphocholine + H2O = a 1-acyl-sn-glycero-3-phosphocholine + a fatty acid + H(+). Snake venom phospholipase A2 (PLA2) that shows high lipolytic and weak ADP-induced platelet aggregation activities. Also shows weak anticoagulant activity. PLA2 catalyzes the calcium-dependent hydrolysis of the 2-acyl groups in 3-sn-phosphoglycerides. In Crotalus horridus (Timber rattlesnake), this protein is Acidic phospholipase A2 CH-E6'.